A 101-amino-acid chain; its full sequence is MIPGEIITPAGEIELNVGRPTIKLQVSNTGDRPIQVGSHYHFYEVNTALNFDREQARGMRLDIPAGTAVRFEPGDEKEIILVPLVGTRQVYGFNAKINGNL.

Belongs to the urease beta subunit family. In terms of assembly, heterotrimer of UreA (gamma), UreB (beta) and UreC (alpha) subunits. Three heterotrimers associate to form the active enzyme.

It localises to the cytoplasm. The enzyme catalyses urea + 2 H2O + H(+) = hydrogencarbonate + 2 NH4(+). It participates in nitrogen metabolism; urea degradation; CO(2) and NH(3) from urea (urease route): step 1/1. This chain is Urease subunit beta, found in Nostoc punctiforme (strain ATCC 29133 / PCC 73102).